Consider the following 705-residue polypeptide: Tyrosine decarboxylase (705 aa).

Polar residues predominate over residues 22–32 (RIRNSLSPSRP). Positions 22–81 (RIRNSLSPSRPSMSEATATGSSSSSRASTTIPSTPNMDVTPTVEDPRQNDNNASGMTRDE) are disordered. Positions 33-55 (SMSEATATGSSSSSRASTTIPST) are enriched in low complexity. At Lys380 the chain carries N6-(pyridoxal phosphate)lysine. Positions 554 to 620 (VKAVIAEEDE…AQKQHESLAK (67 aa)) form a coiled coil. The segment covering 667 to 678 (HSQRPNRLSQSP) has biased composition (polar residues). Residues 667–687 (HSQRPNRLSQSPGSAGSAFFD) form a disordered region.

This sequence belongs to the group II decarboxylase family. It depends on pyridoxal 5'-phosphate as a cofactor. As to expression, expressed in the gonadal sheath projections in between the oocytes, in head RIM motor neurons and RIC interneurons.

The protein localises to the cytoplasm. The protein resides in the cell projection. It is found in the axon. It localises to the perikaryon. It catalyses the reaction L-tyrosine + H(+) = tyramine + CO2. Functionally, required for the decarboxylation of tyrosine to tyramine, a precursor of octopamine but probably also itself a neurotransmitter. Involved in the regulation of egg laying, which is inhibited by tyramine. Also involved in controlling locomotion and head movements. Due to its involvement in octopamine biosynthesis, also required for crtc-1-dependent regulation of AMPK-mediated longevity which requires octopamine signaling. This is Tyrosine decarboxylase from Caenorhabditis elegans.